A 704-amino-acid polypeptide reads, in one-letter code: SH3KBP1-binding protein 1 (704 aa).

Ala-2 carries the post-translational modification N-acetylalanine. Positions 19 to 88 (EVIHLNVGGK…LRTKELDPRG (70 aa)) constitute a BTB domain. Residues 146 to 165 (VGPQQIGGRPAPVRRSNTMP) are disordered. Thr-163 carries the phosphothreonine modification. WD repeat units follow at residues 233 to 280 (RLDW…GGSE), 283 to 322 (VFHLGVPVEALFFVGNQLIATSHTGRIGVWNAVTKHWQVQ), 324 to 359 (VQPITSYDAAGSFLLLGCSNGSIYYVDVQKFPLRMK), 428 to 466 (VHRSPVTKIMLSEKHLISVCADNNHVRTWSVTRFRGMIS), and 548 to 586 (LECEGSRRLGSRPRRYLLTGQANGSLAMWDLTTAMDGLG). A disordered region spans residues 609 to 704 (PLTSSRASFP…PKNTLNETSF (96 aa)). A compositionally biased stretch (low complexity) spans 611–631 (TSSRASFPSPSPRTSLTSLHS). The PXXXPR signature appears at 618-623 (PSPSPR). Ser-644 and Ser-646 each carry phosphoserine. The short motif at 678–683 (PTPAPR) is the PXXXPR element.

Belongs to the KCTD3 family. In terms of assembly, monomer. Interacts with CUL3; interaction is direct and forms a 5:5 heterodecamer. Interacts (via PXXXPR motifs) with SH3KBP1 (via SH3 domains). Directly interacts with cathepsin B/CTSB.

It localises to the lysosome. Its function is as follows. Inhibits CBL-SH3KBP1 complex mediated down-regulation of EGFR signaling by sequestration of SH3KBP1. Binds to SH3KBP1 and prevents its interaction with CBL and inhibits translocation of SH3KBP1 to EGFR containing vesicles upon EGF stimulation. In Rattus norvegicus (Rat), this protein is SH3KBP1-binding protein 1 (Shkbp1).